The following is a 265-amino-acid chain: Urease accessory protein UreH (265 aa).

It belongs to the UreD family. As to quaternary structure, ureH, UreF and UreG form a complex that acts as a GTP-hydrolysis-dependent molecular chaperone, activating the urease apoprotein by helping to assemble the nickel containing metallocenter of UreC. The UreE protein probably delivers the nickel.

It localises to the cytoplasm. Required for maturation of urease via the functional incorporation of the urease nickel metallocenter. In Helicobacter pylori (strain G27), this protein is Urease accessory protein UreH.